A 254-amino-acid polypeptide reads, in one-letter code: MNRRRRIYEGKAKILYEGPEPGTLIQFFKDDATAFNKKKHDVIDGKGVLNNRISEYIFTHLNKIGIPTHFIRRLNMREQLIKEVEIIPLEIVVRNVAAGSLSKRLGIEEGTVLPRSIIEFYYKADALDDPMVSEEHITAFGWASPQELDDIMALAIRINDFLSGLFLGVGIQLVDFKIECGRLYEGDMMRIILADEISPDSCRLWDIETKEKMDKDRFRRDMGGLVEAYQEVARRLGIINENEPPRGSGPVLVK.

The protein belongs to the SAICAR synthetase family.

It catalyses the reaction 5-amino-1-(5-phospho-D-ribosyl)imidazole-4-carboxylate + L-aspartate + ATP = (2S)-2-[5-amino-1-(5-phospho-beta-D-ribosyl)imidazole-4-carboxamido]succinate + ADP + phosphate + 2 H(+). It participates in purine metabolism; IMP biosynthesis via de novo pathway; 5-amino-1-(5-phospho-D-ribosyl)imidazole-4-carboxamide from 5-amino-1-(5-phospho-D-ribosyl)imidazole-4-carboxylate: step 1/2. This chain is Phosphoribosylaminoimidazole-succinocarboxamide synthase, found in Sinorhizobium medicae (strain WSM419) (Ensifer medicae).